Consider the following 260-residue polypeptide: MLSKRVIVCLDVRDGKTTKGIKFKGNVDIGDPVDMARVYYEAGCDELVFYDITASHEKRGIMIDVVRRVAETIFIPFSVGGGISSVEDMRDVLLAGAEKISVNSAAVKNPKIITQGAEAFGNQCVVLGMDVKKVEKSEKIPSGYEIVINGGRTYMGIDALWWAQEGERLGAGEICLNSIDADGTKEGYELELTALISENVNIPVIASGGGGIPQHLGDVLKEGKADAALIASMVHYGTYTIPEIKDHLKSQGISVRDQLQ.

Residues D11 and D130 contribute to the active site.

Belongs to the HisA/HisF family. Heterodimer of HisH and HisF.

It localises to the cytoplasm. It carries out the reaction 5-[(5-phospho-1-deoxy-D-ribulos-1-ylimino)methylamino]-1-(5-phospho-beta-D-ribosyl)imidazole-4-carboxamide + L-glutamine = D-erythro-1-(imidazol-4-yl)glycerol 3-phosphate + 5-amino-1-(5-phospho-beta-D-ribosyl)imidazole-4-carboxamide + L-glutamate + H(+). It participates in amino-acid biosynthesis; L-histidine biosynthesis; L-histidine from 5-phospho-alpha-D-ribose 1-diphosphate: step 5/9. Functionally, IGPS catalyzes the conversion of PRFAR and glutamine to IGP, AICAR and glutamate. The HisF subunit catalyzes the cyclization activity that produces IGP and AICAR from PRFAR using the ammonia provided by the HisH subunit. This is Imidazole glycerol phosphate synthase subunit HisF from Desulfatibacillum aliphaticivorans.